Consider the following 252-residue polypeptide: MASSSSSLLILAVACFVSLISPAISQQACKSQNLNSAGPFDSCEDLPVLNSYLHYTYNSSNSSLSVAFVATPSQANGGWVAWAINPTGTKMAGSQAFLAYRSGGGAAPVVKTYNISSYSSLVEGKLAFDFWNLRAESLSGGRIAIFTTVKVPAGADSVNQVWQIGGNVTNGRPGVHPFGPDNLGSHRVLSFTEDAAPGSAPSPGSAPAPGTSGSTTPGTAAGGPGNAGSLTRNVNFGVNLGILVLLGSIFIF.

An N-terminal signal peptide occupies residues 1–25; it reads MASSSSSLLILAVACFVSLISPAIS. In terms of domain architecture, DOMON spans 49 to 165; it reads LNSYLHYTYN…DSVNQVWQIG (117 aa). N-linked (GlcNAc...) asparagine glycans are attached at residues Asn58 and Asn61. Residue Met91 coordinates heme. Asn114 and Asn167 each carry an N-linked (GlcNAc...) asparagine glycan. A heme-binding site is contributed by His176. The disordered stretch occupies residues 193–224; it reads EDAAPGSAPSPGSAPAPGTSGSTTPGTAAGGP. Over residues 195 to 219 the composition is skewed to low complexity; sequence AAPGSAPSPGSAPAPGTSGSTTPGT. Asn226 carries the GPI-anchor amidated asparagine lipid modification. The propeptide at 227–252 is removed in mature form; it reads AGSLTRNVNFGVNLGILVLLGSIFIF.

Heme is required as a cofactor.

It localises to the cell membrane. One-heme-containing cytochrome. The chain is Auxin-induced in root cultures protein 12 (AIR12) from Arabidopsis thaliana (Mouse-ear cress).